The primary structure comprises 428 residues: Cyclic AMP-responsive element-binding protein 3-like protein 4 (428 aa).

Residues 1–68 (MLLGSLFEQT…EFLQMMINPN (68 aa)) form a required for transcriptional activation region. Topologically, residues 1–294 (MLLGSLFEQT…QTSNKAAQTS (294 aa)) are cytoplasmic. The interval 71-111 (YSTGPAAAESPESDSGFSDDPRPDTPPQSETSPPLPQPTPV) is disordered. The region spanning 216-279 (ILKKVRRKIR…ISLITQLRKL (64 aa)) is the bZIP domain. Residues 218 to 247 (KKVRRKIRNKQSAQDSRRRKKEYIDGLESR) are basic motif. The segment at 258 to 279 (LHKKVVELEKHNISLITQLRKL) is leucine-zipper. Residues 295–315 (TCVLILLFSLALLVFPSYSPF) form a helical; Signal-anchor for type II membrane protein membrane-spanning segment. At 316-428 (RSRPSASQED…LSKTARADEM (113 aa)) the chain is on the lumenal side. Residues 339 to 428 (NKGGFSEVAD…LSKTARADEM (90 aa)) are disordered. A compositionally biased stretch (basic and acidic residues) spans 354 to 368 (TLHRAQQREEGDPGR). N-linked (GlcNAc...) asparagine glycosylation occurs at Asn418.

The protein belongs to the bZIP family. ATF subfamily. As to quaternary structure, binds DNA as a dimer. In terms of processing, controlled by regulated intramembrane proteolysis (RIP). A fragment containing the cytoplasmic transcription factor domain is released by proteolysis. The cleavage seems to be performed sequentially by site-1 and site-2 proteases (PS1 and PS2).

Its subcellular location is the endoplasmic reticulum membrane. It is found in the nucleus. In terms of biological role, transcriptional activator. This Xenopus tropicalis (Western clawed frog) protein is Cyclic AMP-responsive element-binding protein 3-like protein 4 (creb3l4).